The following is a 209-amino-acid chain: dITP/XTP pyrophosphatase (209 aa).

7-12 (SSHGYK) lines the substrate pocket. Asp70 (proton acceptor) is an active-site residue. Position 70 (Asp70) interacts with Mg(2+). Substrate-binding positions include Ser71, 154–157 (FGYD), Lys177, and 182–183 (HR).

The protein belongs to the HAM1 NTPase family. As to quaternary structure, homodimer. Mg(2+) serves as cofactor.

The enzyme catalyses XTP + H2O = XMP + diphosphate + H(+). It carries out the reaction dITP + H2O = dIMP + diphosphate + H(+). It catalyses the reaction ITP + H2O = IMP + diphosphate + H(+). Its function is as follows. Pyrophosphatase that catalyzes the hydrolysis of nucleoside triphosphates to their monophosphate derivatives, with a high preference for the non-canonical purine nucleotides XTP (xanthosine triphosphate), dITP (deoxyinosine triphosphate) and ITP. Seems to function as a house-cleaning enzyme that removes non-canonical purine nucleotides from the nucleotide pool, thus preventing their incorporation into DNA/RNA and avoiding chromosomal lesions. The protein is dITP/XTP pyrophosphatase of Chlamydia muridarum (strain MoPn / Nigg).